We begin with the raw amino-acid sequence, 154 residues long: Nucleoside diphosphate kinase A1 (154 aa).

ATP is bound by residues lysine 13, phenylalanine 61, arginine 89, threonine 95, arginine 106, and asparagine 116. The active-site Pros-phosphohistidine intermediate is histidine 119.

The protein belongs to the NDK family. Requires Mg(2+) as cofactor.

The protein localises to the cytoplasm. The catalysed reaction is a 2'-deoxyribonucleoside 5'-diphosphate + ATP = a 2'-deoxyribonucleoside 5'-triphosphate + ADP. The enzyme catalyses a ribonucleoside 5'-diphosphate + ATP = a ribonucleoside 5'-triphosphate + ADP. Major role in the synthesis of nucleoside triphosphates other than ATP. The ATP gamma phosphate is transferred to the NDP beta phosphate via a ping-pong mechanism, using a phosphorylated active-site intermediate. The chain is Nucleoside diphosphate kinase A1 from Xenopus laevis (African clawed frog).